We begin with the raw amino-acid sequence, 189 residues long: UPF0301 protein CAB604 (189 aa).

It belongs to the UPF0301 (AlgH) family.

This Chlamydia abortus (strain DSM 27085 / S26/3) (Chlamydophila abortus) protein is UPF0301 protein CAB604.